Reading from the N-terminus, the 556-residue chain is Formate--tetrahydrofolate ligase (556 aa).

Residue 65 to 72 (TPAGEGKS) coordinates ATP.

Belongs to the formate--tetrahydrofolate ligase family.

The enzyme catalyses (6S)-5,6,7,8-tetrahydrofolate + formate + ATP = (6R)-10-formyltetrahydrofolate + ADP + phosphate. It participates in one-carbon metabolism; tetrahydrofolate interconversion. The sequence is that of Formate--tetrahydrofolate ligase from Streptococcus pneumoniae (strain Taiwan19F-14).